The following is a 504-amino-acid chain: Cytochrome P450 3A2 (504 aa).

Position 443 (cysteine 443) interacts with heme.

It belongs to the cytochrome P450 family. Heme serves as cofactor. Expressed in liver.

The protein resides in the endoplasmic reticulum membrane. It is found in the microsome membrane. It catalyses the reaction an organic molecule + reduced [NADPH--hemoprotein reductase] + O2 = an alcohol + oxidized [NADPH--hemoprotein reductase] + H2O + H(+). Cytochromes P450 are a group of heme-thiolate monooxygenases. In liver microsomes, this enzyme is involved in an NADPH-dependent electron transport pathway. It oxidizes a variety of structurally unrelated compounds, including steroids, fatty acids, and xenobiotics. The polypeptide is Cytochrome P450 3A2 (Cyp3a2) (Rattus norvegicus (Rat)).